The chain runs to 344 residues: F17a-G fimbrial adhesin (344 aa).

The N-terminal stretch at 1–22 (MTNFYKVFLAVFILVCCNISQA) is a signal peptide. A receptor-binding lectin domain region spans residues 23–199 (AVSFIGSTEN…SLNPFTLNDT (177 aa)). Residues 65–66 (AN), 110–111 (DT), and 139–142 (STQG) each bind a carbohydrate. Cysteines 75 and 132 form a disulfide. The tract at residues 200 to 344 (VTSCRLLTPS…GISTFTFSYQ (145 aa)) is fimbrillin-binding domain. Residues 288–308 (LKFGPDSPVKGNENQWQLSTG) form a disordered region. Over residues 299 to 308 (NENQWQLSTG) the composition is skewed to polar residues.

Belongs to the fimbrial protein family.

It localises to the fimbrium. Essential fimbrial adhesion factor that mediates binding to N-acetylglucosamine-containing receptors in the host intestinal microvilli, leading to colonization of the intestinal tissue, and diarrhea or septicemia. Also confers adhesiveness to laminin and basement membranes. The sequence is that of F17a-G fimbrial adhesin (f17aG) from Escherichia coli.